The following is a 590-amino-acid chain: Arginine--tRNA ligase (590 aa).

The 'HIGH' region motif lies at 126 to 136; that stretch reads PNVAKEMHVGH.

This sequence belongs to the class-I aminoacyl-tRNA synthetase family. As to quaternary structure, monomer.

Its subcellular location is the cytoplasm. The enzyme catalyses tRNA(Arg) + L-arginine + ATP = L-arginyl-tRNA(Arg) + AMP + diphosphate. The sequence is that of Arginine--tRNA ligase from Streptomyces avermitilis (strain ATCC 31267 / DSM 46492 / JCM 5070 / NBRC 14893 / NCIMB 12804 / NRRL 8165 / MA-4680).